The chain runs to 453 residues: UDP-N-acetylmuramate--L-alanine ligase (453 aa).

112–118 (GTHGKTT) is a binding site for ATP.

This sequence belongs to the MurCDEF family.

The protein resides in the cytoplasm. The catalysed reaction is UDP-N-acetyl-alpha-D-muramate + L-alanine + ATP = UDP-N-acetyl-alpha-D-muramoyl-L-alanine + ADP + phosphate + H(+). It functions in the pathway cell wall biogenesis; peptidoglycan biosynthesis. Cell wall formation. This chain is UDP-N-acetylmuramate--L-alanine ligase, found in Bdellovibrio bacteriovorus (strain ATCC 15356 / DSM 50701 / NCIMB 9529 / HD100).